We begin with the raw amino-acid sequence, 579 residues long: YTH domain-containing family protein 2 (579 aa).

Positions 1–45 (MSASSLLEQRPKGQGNKVQNGSVHQKDGLNDDDFEPYLSPQARPN) are disordered. Ser2 bears the N-acetylserine mark. 6 positions are modified to phosphoserine: Ser2, Ser4, Ser5, Ser22, Ser39, and Ser196. A localization to mRNA processing bodies (P-bodies) region spans residues 2 to 384 (SASSLLEQRP…QAGSGSTPSE (383 aa)). A disordered region spans residues 247–387 (AKQQPKLKTK…SGSTPSEPHP (141 aa)). Positions 291–316 (ALVQNIGQPTQGSPQPVGQQANNSPP) are enriched in polar residues. Over residues 337–349 (AQLSVQQQAAQPT) the composition is skewed to low complexity. The residue at position 359 (Ser359) is a Phosphoserine. A compositionally biased stretch (gly residues) spans 359 to 371 (SGFGHNGVDGNGV). Over residues 372-383 (GQSQAGSGSTPS) the composition is skewed to polar residues. Residues 385-579 (PHPVLEKLRS…VKKERQGRGK (195 aa)) form an interaction with m6A-containing mRNAs region. Ser394 carries the post-translational modification Phosphoserine. Residues 410 to 544 (GRVFIIKSYS…EKAKQVLKII (135 aa)) form the YTH domain. RNA-binding positions include 416-418 (KSY), Asp422, 432-433 (WC), Asn462, Trp486, and Trp491.

Belongs to the YTHDF family. YTHDF2 subfamily. As to quaternary structure, interacts with CNOT1; interaction is direct and promotes recruitment of the CCR4-NOT complex. Interacts with YTHDF3. Interacts with RIDA/HRSP12; interaction leads to recruitment of the ribonuclease P/MRP complex. Ubiquitinated by the SCF(SKP2) complex, leading to its degradation. Widely expressed, with highest expression in testis.

It localises to the cytoplasm. The protein localises to the cytosol. Its subcellular location is the P-body. The protein resides in the stress granule. It is found in the nucleus. Specifically recognizes and binds N6-methyladenosine (m6A)-containing RNAs, and regulates their stability. M6A is a modification present at internal sites of mRNAs and some non-coding RNAs and plays a role in mRNA stability and processing. Acts as a regulator of mRNA stability by promoting degradation of m6A-containing mRNAs via interaction with the CCR4-NOT and ribonuclease P/MRP complexes, depending on the context. The YTHDF paralogs (YTHDF1, YTHDF2 and YTHDF3) share m6A-containing mRNAs targets and act redundantly to mediate mRNA degradation and cellular differentiation. M6A-containing mRNAs containing a binding site for RIDA/HRSP12 (5'-GGUUC-3') are preferentially degraded by endoribonucleolytic cleavage: cooperative binding of RIDA/HRSP12 and YTHDF2 to transcripts leads to recruitment of the ribonuclease P/MRP complex. Other m6A-containing mRNAs undergo deadenylation via direct interaction between YTHDF2 and CNOT1, leading to recruitment of the CCR4-NOT and subsequent deadenylation of m6A-containing mRNAs. Required maternally to regulate oocyte maturation: probably acts by binding to m6A-containing mRNAs, thereby regulating maternal transcript dosage during oocyte maturation, which is essential for the competence of oocytes to sustain early zygotic development. Also required during spermatogenesis: regulates spermagonial adhesion by promoting degradation of m6A-containing transcripts coding for matrix metallopeptidases. Also involved in hematopoietic stem cells specification by binding to m6A-containing mRNAs, leading to promote their degradation. Also acts as a regulator of neural development by promoting m6A-dependent degradation of neural development-related mRNA targets. Inhibits neural specification of induced pluripotent stem cells by binding to methylated neural-specific mRNAs and promoting their degradation, thereby restraining neural differentiation. Regulates circadian regulation of hepatic lipid metabolism: acts by promoting m6A-dependent degradation of PPARA transcripts. Regulates the innate immune response to infection by inhibiting the type I interferon response: acts by binding to m6A-containing IFNB transcripts and promoting their degradation. May also act as a promoter of cap-independent mRNA translation following heat shock stress: upon stress, relocalizes to the nucleus and specifically binds mRNAs with some m6A methylation mark at their 5'-UTR, protecting demethylation of mRNAs by FTO, thereby promoting cap-independent mRNA translation. Regulates mitotic entry by promoting the phase-specific m6A-dependent degradation of WEE1 transcripts. Promotes formation of phase-separated membraneless compartments, such as P-bodies or stress granules, by undergoing liquid-liquid phase separation upon binding to mRNAs containing multiple m6A-modified residues: polymethylated mRNAs act as a multivalent scaffold for the binding of YTHDF proteins, juxtaposing their disordered regions and thereby leading to phase separation. The resulting mRNA-YTHDF complexes then partition into different endogenous phase-separated membraneless compartments, such as P-bodies, stress granules or neuronal RNA granules. May also recognize and bind RNAs modified by C5-methylcytosine (m5C) and act as a regulator of rRNA processing. This chain is YTH domain-containing family protein 2, found in Mus musculus (Mouse).